The sequence spans 77 residues: Homeodomain-only protein (77 aa).

Positions 7–65 form a DNA-binding region, homeobox; degenerate; sequence AALGVRLTEDQVKVLEENFTKVSKHPDETTLMLIAAECGLSEEQTAVWFRMRNAQWRKA.

It localises to the nucleus. The protein localises to the cytoplasm. Atypical homeodomain protein which does not bind DNA and is required to modulate cardiac growth and development. May act via an interaction with SRF, leading to modulate the expression of SRF-dependent cardiac-specific genes and cardiac development. May act as a co-chaperone for HSPA1A and HSPA1B chaperone proteins and assist in chaperone-mediated protein refolding. The protein is Homeodomain-only protein (hopx) of Danio rerio (Zebrafish).